The sequence spans 273 residues: Putative phosphoenolpyruvate synthase regulatory protein (273 aa).

Residue 153–160 (AVSRAGKT) participates in ADP binding.

It belongs to the pyruvate, phosphate/water dikinase regulatory protein family. PSRP subfamily.

The enzyme catalyses [pyruvate, water dikinase] + ADP = [pyruvate, water dikinase]-phosphate + AMP + H(+). It catalyses the reaction [pyruvate, water dikinase]-phosphate + phosphate + H(+) = [pyruvate, water dikinase] + diphosphate. In terms of biological role, bifunctional serine/threonine kinase and phosphorylase involved in the regulation of the phosphoenolpyruvate synthase (PEPS) by catalyzing its phosphorylation/dephosphorylation. The chain is Putative phosphoenolpyruvate synthase regulatory protein from Xanthomonas campestris pv. campestris (strain ATCC 33913 / DSM 3586 / NCPPB 528 / LMG 568 / P 25).